We begin with the raw amino-acid sequence, 331 residues long: 6-phosphogluconolactonase (331 aa).

Lysine 287 is subject to N6-acetyllysine.

Belongs to the cycloisomerase 2 family.

It carries out the reaction 6-phospho-D-glucono-1,5-lactone + H2O = 6-phospho-D-gluconate + H(+). It participates in carbohydrate degradation; pentose phosphate pathway; D-ribulose 5-phosphate from D-glucose 6-phosphate (oxidative stage): step 2/3. In terms of biological role, catalyzes the hydrolysis of 6-phosphogluconolactone to 6-phosphogluconate. This Escherichia fergusonii (strain ATCC 35469 / DSM 13698 / CCUG 18766 / IAM 14443 / JCM 21226 / LMG 7866 / NBRC 102419 / NCTC 12128 / CDC 0568-73) protein is 6-phosphogluconolactonase.